The chain runs to 643 residues: Threonine--tRNA ligase (643 aa).

The region spanning 3–64 (DVVKITFPDG…EEDGAISIIT (62 aa)) is the TGS domain. Positions 245–542 (DHRKLGKELD…LIEEYKGAFP (298 aa)) are catalytic. Cysteine 338, histidine 389, and histidine 519 together coordinate Zn(2+).

Belongs to the class-II aminoacyl-tRNA synthetase family. Homodimer. Zn(2+) serves as cofactor.

The protein localises to the cytoplasm. The catalysed reaction is tRNA(Thr) + L-threonine + ATP = L-threonyl-tRNA(Thr) + AMP + diphosphate + H(+). Catalyzes the attachment of threonine to tRNA(Thr) in a two-step reaction: L-threonine is first activated by ATP to form Thr-AMP and then transferred to the acceptor end of tRNA(Thr). Also edits incorrectly charged L-seryl-tRNA(Thr). This Anoxybacillus flavithermus (strain DSM 21510 / WK1) protein is Threonine--tRNA ligase.